Reading from the N-terminus, the 143-residue chain is Large ribosomal subunit protein mL51 (143 aa).

Residues 1-52 (MAALVRGLMRRVAALPQAVRSVSGGGQRHEPYRPLPITSPLAGLPRNFRVRE) constitute a mitochondrion transit peptide.

Belongs to the mitochondrion-specific ribosomal protein mL51 family. In terms of assembly, component of the mitochondrial ribosome large subunit (39S) which comprises a 16S rRNA and about 50 distinct proteins.

It is found in the mitochondrion. This chain is Large ribosomal subunit protein mL51 (MRPL51), found in Gallus gallus (Chicken).